The chain runs to 494 residues: GlcNAc-binding protein A (494 aa).

Positions 1–21 (MKLNKIMLAMVVMSISGTAMA) are cleaved as a signal peptide. Residues 22-192 (HGYIENPPSR…TFYNMIDAEF (171 aa)) form the Chitin-binding type-4 domain. Residues 435–484 (APAWSNKSSYQAKDTVTHNGRIYMSKWWADKASVPGDAAVTDTTGNGSGW) form the Chitin-binding type-3 domain. The tract at residues 474-494 (VTDTTGNGSGWGKVWEDKGAC) is disordered.

This sequence belongs to the GbpA family.

The protein resides in the secreted. Probably interacts with GlcNAc residues. May promote attachment to both epithelial cell surfaces and chitin. In Yersinia enterocolitica serotype O:8 / biotype 1B (strain NCTC 13174 / 8081), this protein is GlcNAc-binding protein A.